A 259-amino-acid chain; its full sequence is 3-deoxy-manno-octulosonate cytidylyltransferase (259 aa).

This sequence belongs to the KdsB family.

The protein localises to the cytoplasm. The catalysed reaction is 3-deoxy-alpha-D-manno-oct-2-ulosonate + CTP = CMP-3-deoxy-beta-D-manno-octulosonate + diphosphate. Its pathway is nucleotide-sugar biosynthesis; CMP-3-deoxy-D-manno-octulosonate biosynthesis; CMP-3-deoxy-D-manno-octulosonate from 3-deoxy-D-manno-octulosonate and CTP: step 1/1. It participates in bacterial outer membrane biogenesis; lipopolysaccharide biosynthesis. In terms of biological role, activates KDO (a required 8-carbon sugar) for incorporation into bacterial lipopolysaccharide in Gram-negative bacteria. The sequence is that of 3-deoxy-manno-octulosonate cytidylyltransferase from Protochlamydia amoebophila (strain UWE25).